A 235-amino-acid chain; its full sequence is UPF0758 protein A1S_2918 (235 aa).

A disordered region spans residues 1–20 (MNTSIKNWPEQERPRERLLQ). A compositionally biased stretch (basic and acidic residues) spans 9–18 (PEQERPRERL). The MPN domain maps to 105-227 (SLHSSHLVLD…SFSFAEQQLL (123 aa)). Zn(2+) is bound by residues His-176, His-178, and Asp-189. The short motif at 176 to 189 (HNHPFGSPQPSPED) is the JAMM motif element.

It belongs to the UPF0758 family.

The chain is UPF0758 protein A1S_2918 from Acinetobacter baumannii (strain ATCC 17978 / DSM 105126 / CIP 53.77 / LMG 1025 / NCDC KC755 / 5377).